Consider the following 508-residue polypeptide: Glycogen synthase (508 aa).

Lys-15 contacts ADP-alpha-D-glucose. The interval 483–508 (ARNRAETRPQTASALSYREPRPAAEY) is disordered.

It belongs to the glycosyltransferase 1 family. Bacterial/plant glycogen synthase subfamily.

The enzyme catalyses [(1-&gt;4)-alpha-D-glucosyl](n) + ADP-alpha-D-glucose = [(1-&gt;4)-alpha-D-glucosyl](n+1) + ADP + H(+). Its pathway is glycan biosynthesis; glycogen biosynthesis. In terms of biological role, synthesizes alpha-1,4-glucan chains using ADP-glucose. The chain is Glycogen synthase from Paracidovorax citrulli (strain AAC00-1) (Acidovorax citrulli).